Here is a 462-residue protein sequence, read N- to C-terminus: MELKNMELKRKLTINEINFIVDFIQPRPYIPPDIENAIIFKKKKGIIDQLVTIEIYESLIPKLKEEIEKQYVNSLIDPGECVGIIGAQSMGEYSTQATLNTFHVAGVDTGSSTGVSRFQDLINASKTVKIDNISLFFKPLFVKKNITELRKLVASKLIEVKLSHLMITSVIVKTEEISQYRQEIESCIELYNDEHFNYEDYEFCLKITLSRELLLKHRLHPSVIKNKLEEYNNDCKYAFLPISSQQILFFIFIYVNTDECIEKIIQDLMDKKICGVDGIIRYDFKRKDLFDDEWYIETTGGSFSNINCLADIFDLTKTKTTSIWDLYNTFGIEATKQFLIQELKTVMDGVDICHIKLLVERMTYSGTIEPITRYTMRNDESPLSRASFEESFETFLKAAKFKEIEPFTGVSASVIGGKKTEVGTYMCDILIDMEKLNLGDLKTIEDDDEYDYEDDGDLVYVE.

It belongs to the RNA polymerase beta' chain family.

The enzyme catalyses RNA(n) + a ribonucleoside 5'-triphosphate = RNA(n+1) + diphosphate. Its function is as follows. Component of the DNA-dependent RNA polymerase that catalyzes the transcription in the cytoplasm of viral DNA into RNA using the four ribonucleoside triphosphates as substrates. This is Probable DNA-directed RNA polymerase subunit 343L from Acheta domesticus (House cricket).